Reading from the N-terminus, the 137-residue chain is Diacylglycerol kinase (137 aa).

E42 provides a ligand contact to a divalent metal cation. Transmembrane regions (helical) follow at residues 49 to 67 (LIAF…ATFF) and 73 to 89 (AILF…NTAI). E83 functions as the Proton acceptor in the catalytic mechanism. E90 contacts a divalent metal cation. Residues 112–132 (SFACLCLIVANGVYAAYVVIF) traverse the membrane as a helical segment.

Belongs to the bacterial diacylglycerol kinase family. It depends on Mg(2+) as a cofactor.

The protein resides in the cell inner membrane. The enzyme catalyses a 1,2-diacyl-sn-glycerol + ATP = a 1,2-diacyl-sn-glycero-3-phosphate + ADP + H(+). Its function is as follows. Catalyzes the ATP-dependent phosphorylation of sn-l,2-diacylglycerol (DAG) to phosphatidic acid. Involved in the recycling of diacylglycerol produced as a by-product during membrane-derived oligosaccharide (MDO) biosynthesis. This chain is Diacylglycerol kinase (dgkA), found in Sinorhizobium sp.